The chain runs to 513 residues: Glycine/sarcosine/betaine reductase complex component C subunit beta (513 aa).

As to quaternary structure, heterooctamer of four alpha and four beta subunits. Component of the glycine, sarcosine and betaine reductase complexes, together with proteins A and B.

It carries out the reaction acetyl phosphate + [thioredoxin]-disulfide + NH4(+) + H2O = [thioredoxin]-dithiol + glycine + phosphate + H(+). It catalyses the reaction acetyl phosphate + methylamine + [thioredoxin]-disulfide + H2O = sarcosine + [thioredoxin]-dithiol + phosphate + H(+). The enzyme catalyses acetyl phosphate + trimethylamine + [thioredoxin]-disulfide + H2O = glycine betaine + [thioredoxin]-dithiol + phosphate + H(+). Functionally, in the first step of glycine, betaine and sarcosine reductases, the substrate is bound to component PB via a Schiff base intermediate. Then the PB-activated substrate is nucleophilically attacked by the selenol anion of component PA to transform it to a carboxymethylated selenoether and the respective amine. By action of component PC, acetyl phosphate is formed, leaving component PA in its oxidized state. Finally component PA becomes reduced by the thioredoxin system to start a new catalytic cycle of reductive deamination. This chain is Glycine/sarcosine/betaine reductase complex component C subunit beta (grdC), found in Peptoclostridium acidaminophilum (Eubacterium acidaminophilum).